The primary structure comprises 239 residues: UPF0641 membrane protein YHR140W (239 aa).

The Cytoplasmic portion of the chain corresponds to 1-11 (MMSCLVPTRFT). A helical membrane pass occupies residues 12–31 (LTLNTACLLTSTWGFVRATS). Residues 32–45 (VVLPPSLSKAGHKQ) are Lumenal-facing. Residues 46-66 (FLTIISIIATIINNAVNISNY) traverse the membrane as a helical segment. Over 67–99 (YIQRNNKMNLETKKKSDFISRHVTLPVSLVLES) the chain is Cytoplasmic. Residues 100–120 (IVATVYWPLRLFFVNLIMHGV) form a helical membrane-spanning segment. Over 121 to 125 (ESTAK) the chain is Lumenal. A helical membrane pass occupies residues 126–146 (TPFPMTVDMAIHLYPILYLLA). Residues 147 to 162 (DHYLSGSGTKFKLSNK) lie on the Cytoplasmic side of the membrane. Residues 163–183 (HAWLIVTSLAFSYFQYLAFLI) traverse the membrane as a helical segment. Over 184–204 (DAGQGQAYPYPFLDVNEPYKS) the chain is Lumenal. Residues 205–225 (IIFVVVATITWAYYVFYQKFP) form a helical membrane-spanning segment. At 226–239 (PKYIKKSAKKGDKN) the chain is on the cytoplasmic side.

The protein belongs to the UPF0641 family.

It localises to the endoplasmic reticulum membrane. The chain is UPF0641 membrane protein YHR140W from Saccharomyces cerevisiae (strain ATCC 204508 / S288c) (Baker's yeast).